Reading from the N-terminus, the 330-residue chain is 2-methoxy-6-polyprenyl-1,4-benzoquinol methylase, mitochondrial (330 aa).

The transit peptide at 1–42 (MAAPRSWALWSFCGCGWSRAVSGCRLPGLRSSSPRGPLGARL) directs the protein to the mitochondrion. S-adenosyl-L-methionine contacts are provided by residues Thr-117, Asp-171, and 199 to 200 (DA).

Belongs to the class I-like SAM-binding methyltransferase superfamily. MenG/UbiE family. Component of a multi-subunit COQ enzyme complex, composed of at least COQ3, COQ4, COQ5, COQ6, COQ7 and COQ9. Interacts with PYURF; the interaction is direct, stabilizes COQ5 protein and associates PYURF with COQ enzyme complex.

The protein resides in the mitochondrion inner membrane. The catalysed reaction is 2-methoxy-6-(all-trans-decaprenyl)benzene-1,4-diol + S-adenosyl-L-methionine = 5-methoxy-2-methyl-3-(all-trans-decaprenyl)benzene-1,4-diol + S-adenosyl-L-homocysteine + H(+). Its pathway is cofactor biosynthesis; ubiquinone biosynthesis. Functionally, methyltransferase required for the conversion of 2-decaprenyl-6-methoxy-1,4-benzoquinol (DDMQH2) to 2-decaprenyl-3-methyl-6-methoxy-1,4-benzoquinol (DMQH2). The protein is 2-methoxy-6-polyprenyl-1,4-benzoquinol methylase, mitochondrial of Bos taurus (Bovine).